A 293-amino-acid polypeptide reads, in one-letter code: Inner membrane ABC transporter permease protein YcjO (293 aa).

At 1-12 (MNRLFSGRSDMP) the chain is on the periplasmic side. Residues 13-33 (FALLLLAPSLLLLGGLVAWPM) traverse the membrane as a helical segment. Topologically, residues 34 to 77 (VSNIEISFLRLPLNPNIESTFVGVSNYVRILSDPGFWHSLWMTV) are cytoplasmic. Residues 73-283 (LWMTVWYTAL…IIIFAVILLT (211 aa)) form the ABC transmembrane type-1 domain. The chain crosses the membrane as a helical span at residues 78 to 98 (WYTALVVAGSTVLGLAVAMFF). Over 99–110 (NREFRLRKTARS) the chain is Periplasmic. Residues 111 to 131 (LVILSYVTPSISLVFAWKYMF) form a helical membrane-spanning segment. The Cytoplasmic portion of the chain corresponds to 132–135 (NNGY). The chain crosses the membrane as a helical span at residues 136–156 (GIVNYLGVDLLHLYEQAPLWF). Over 157–162 (DNPGSS) the chain is Periplasmic. A helical membrane pass occupies residues 163–183 (FVLVVLFAIWRYFPYAFISFL). The Cytoplasmic portion of the chain corresponds to 184 to 214 (AILQTIDKSLYEAAEMDGANAWQRFRIVTLP). The chain crosses the membrane as a helical span at residues 215–235 (AIMPVLATVVTLRTIWMFYMF). At 236–261 (ADVYLLTTKVDILGVYLYKTAFAFND) the chain is on the periplasmic side. Residues 262 to 282 (LGKAAAISVVLFIIIFAVILL) form a helical membrane-spanning segment. Topologically, residues 283 to 293 (TRKRVNLNGNK) are cytoplasmic.

It belongs to the binding-protein-dependent transport system permease family. MalFG subfamily.

It localises to the cell inner membrane. In terms of biological role, probably part of the binding-protein-dependent transport system YcjNOP. Probably responsible for the translocation of the substrate across the membrane. The protein is Inner membrane ABC transporter permease protein YcjO (ycjO) of Escherichia coli (strain K12).